The following is a 458-amino-acid chain: MALQLYNTLTRQKDIFEPIDPANVRLYACGPTVYDFLHIGNGRMLIVFDLLFRVLRDLYGADHVRYVRNITDVDDKINARAAERGIDIRVLTDEMTAIFHEDAKALNCLPPTVEPRATEHMAEMIAIIEKLVANGHAYIAEGHVLFDVPSMPDYGKLSKRPLDDMIAGARVEVAPYKRSPTDFVLWKPAKPEEPGWESPWGRGRPGWHLECSAMSWKHLGEVFDIHGGGIDLVFPHHENEVAQTCSAFGHDVMANVWMHNGHLQVEGQKMSKSLGNFLTIRDVLKDWPGETVRFTMLKTHYRQPIDWTLSSLRESQRELDRWYPVARAFDQINPDNIPGIPSSFRDALQDDLNTPEAITILRRLYKDALETTDYAGVHLLLCGKLLGLFDQSLEKWKNWKPASFTVENVTFEDLIKEREEARAAKNWPKSDHLRDVLASYGIVLKDNKDGTTSWEAKR.

Position 29 (Cys-29) interacts with Zn(2+). Residues 31–41 (PTVYDFLHIGN) carry the 'HIGH' region motif. Residues Cys-211, His-236, and Glu-240 each coordinate Zn(2+). Positions 269–273 (KMSKS) match the 'KMSKS' region motif. Residue Lys-272 participates in ATP binding.

It belongs to the class-I aminoacyl-tRNA synthetase family. As to quaternary structure, monomer. Zn(2+) serves as cofactor.

Its subcellular location is the cytoplasm. The catalysed reaction is tRNA(Cys) + L-cysteine + ATP = L-cysteinyl-tRNA(Cys) + AMP + diphosphate. The protein is Cysteine--tRNA ligase of Beijerinckia indica subsp. indica (strain ATCC 9039 / DSM 1715 / NCIMB 8712).